We begin with the raw amino-acid sequence, 409 residues long: Peptidase T (409 aa).

His78 is a binding site for Zn(2+). The active site involves Asp80. A Zn(2+)-binding site is contributed by Asp140. The active-site Proton acceptor is Glu174. Positions 175, 197, and 379 each coordinate Zn(2+).

The protein belongs to the peptidase M20B family. Zn(2+) is required as a cofactor.

The protein localises to the cytoplasm. The enzyme catalyses Release of the N-terminal residue from a tripeptide.. Functionally, cleaves the N-terminal amino acid of tripeptides. This Aliivibrio fischeri (strain ATCC 700601 / ES114) (Vibrio fischeri) protein is Peptidase T.